The primary structure comprises 142 residues: Protein archease (142 aa).

Positions 12, 141, and 142 each coordinate Ca(2+).

This sequence belongs to the archease family.

Its function is as follows. Activates the tRNA-splicing ligase complex by facilitating the enzymatic turnover of catalytic subunit RtcB. Acts by promoting the guanylylation of RtcB, a key intermediate step in tRNA ligation. Can also alter the NTP specificity of RtcB such that ATP, dGTP or ITP is used efficiently. The sequence is that of Protein archease from Pyrococcus furiosus (strain ATCC 43587 / DSM 3638 / JCM 8422 / Vc1).